The chain runs to 424 residues: Glutamyl-tRNA reductase (424 aa).

Residues 49-52, serine 107, 112-114, and glutamine 118 each bind substrate; these read TCNR and EPQ. Residue cysteine 50 is the Nucleophile of the active site. 187 to 192 is an NADP(+) binding site; that stretch reads GAGETI.

Belongs to the glutamyl-tRNA reductase family. As to quaternary structure, homodimer.

The catalysed reaction is (S)-4-amino-5-oxopentanoate + tRNA(Glu) + NADP(+) = L-glutamyl-tRNA(Glu) + NADPH + H(+). Its pathway is porphyrin-containing compound metabolism; protoporphyrin-IX biosynthesis; 5-aminolevulinate from L-glutamyl-tRNA(Glu): step 1/2. Functionally, catalyzes the NADPH-dependent reduction of glutamyl-tRNA(Glu) to glutamate 1-semialdehyde (GSA). This Chromohalobacter salexigens (strain ATCC BAA-138 / DSM 3043 / CIP 106854 / NCIMB 13768 / 1H11) protein is Glutamyl-tRNA reductase.